Consider the following 177-residue polypeptide: Large ribosomal subunit protein uL6 (177 aa).

Belongs to the universal ribosomal protein uL6 family. Part of the 50S ribosomal subunit.

In terms of biological role, this protein binds to the 23S rRNA, and is important in its secondary structure. It is located near the subunit interface in the base of the L7/L12 stalk, and near the tRNA binding site of the peptidyltransferase center. This chain is Large ribosomal subunit protein uL6, found in Agrobacterium fabrum (strain C58 / ATCC 33970) (Agrobacterium tumefaciens (strain C58)).